We begin with the raw amino-acid sequence, 471 residues long: Probable ribonuclease FAU-1 (471 aa).

The protein belongs to the FAU-1 family.

Probable RNase involved in rRNA stability through maturation and/or degradation of precursor rRNAs. Binds to RNA in loop regions with AU-rich sequences. The polypeptide is Probable ribonuclease FAU-1 (Thermococcus gammatolerans (strain DSM 15229 / JCM 11827 / EJ3)).